The chain runs to 188 residues: Elongation factor P (188 aa).

The protein belongs to the elongation factor P family.

The protein resides in the cytoplasm. It functions in the pathway protein biosynthesis; polypeptide chain elongation. Its function is as follows. Involved in peptide bond synthesis. Stimulates efficient translation and peptide-bond synthesis on native or reconstituted 70S ribosomes in vitro. Probably functions indirectly by altering the affinity of the ribosome for aminoacyl-tRNA, thus increasing their reactivity as acceptors for peptidyl transferase. The sequence is that of Elongation factor P from Rhodopseudomonas palustris (strain TIE-1).